The chain runs to 206 residues: Large ribosomal subunit protein uL4 (206 aa).

Residues 60–84 (TAKPFKQKGTGHARQGSKRSPQFRG) form a disordered region. The span at 64–76 (FKQKGTGHARQGS) shows a compositional bias: basic residues.

It belongs to the universal ribosomal protein uL4 family. As to quaternary structure, part of the 50S ribosomal subunit.

Its function is as follows. One of the primary rRNA binding proteins, this protein initially binds near the 5'-end of the 23S rRNA. It is important during the early stages of 50S assembly. It makes multiple contacts with different domains of the 23S rRNA in the assembled 50S subunit and ribosome. In terms of biological role, forms part of the polypeptide exit tunnel. In Rhodospirillum rubrum (strain ATCC 11170 / ATH 1.1.1 / DSM 467 / LMG 4362 / NCIMB 8255 / S1), this protein is Large ribosomal subunit protein uL4.